A 513-amino-acid polypeptide reads, in one-letter code: Probable DNA ligase (513 aa).

E213 is an ATP binding site. Catalysis depends on K215, which acts as the N6-AMP-lysine intermediate. Positions 220, 235, 264, 304, 376, and 382 each coordinate ATP.

The protein belongs to the ATP-dependent DNA ligase family. Requires Mg(2+) as cofactor.

It catalyses the reaction ATP + (deoxyribonucleotide)n-3'-hydroxyl + 5'-phospho-(deoxyribonucleotide)m = (deoxyribonucleotide)n+m + AMP + diphosphate.. Functionally, DNA ligase that seals nicks in double-stranded DNA during DNA replication, DNA recombination and DNA repair. The polypeptide is Probable DNA ligase (Anaeromyxobacter dehalogenans (strain 2CP-1 / ATCC BAA-258)).